We begin with the raw amino-acid sequence, 194 residues long: Dephospho-CoA kinase (194 aa).

In terms of domain architecture, DPCK spans 4 to 194 (VIGLTGSIGM…VKEILQKLGA (191 aa)). Position 12–17 (12–17 (GMGKTT)) interacts with ATP.

Belongs to the CoaE family.

Its subcellular location is the cytoplasm. It carries out the reaction 3'-dephospho-CoA + ATP = ADP + CoA + H(+). It functions in the pathway cofactor biosynthesis; coenzyme A biosynthesis; CoA from (R)-pantothenate: step 5/5. Its function is as follows. Catalyzes the phosphorylation of the 3'-hydroxyl group of dephosphocoenzyme A to form coenzyme A. The sequence is that of Dephospho-CoA kinase from Agrobacterium fabrum (strain C58 / ATCC 33970) (Agrobacterium tumefaciens (strain C58)).